The sequence spans 130 residues: Small ribosomal subunit protein uS9 (130 aa).

It belongs to the universal ribosomal protein uS9 family.

The protein is Small ribosomal subunit protein uS9 of Bordetella pertussis (strain Tohama I / ATCC BAA-589 / NCTC 13251).